We begin with the raw amino-acid sequence, 426 residues long: D-tagatose-1,6-bisphosphate aldolase subunit KbaZ (426 aa).

It belongs to the GatZ/KbaZ family. KbaZ subfamily. Forms a complex with KbaY.

It participates in carbohydrate metabolism; D-tagatose 6-phosphate degradation; D-glyceraldehyde 3-phosphate and glycerone phosphate from D-tagatose 6-phosphate: step 2/2. In terms of biological role, component of the tagatose-1,6-bisphosphate aldolase KbaYZ that is required for full activity and stability of the Y subunit. Could have a chaperone-like function for the proper and stable folding of KbaY. When expressed alone, KbaZ does not show any aldolase activity. The polypeptide is D-tagatose-1,6-bisphosphate aldolase subunit KbaZ (Escherichia coli O8 (strain IAI1)).